Consider the following 394-residue polypeptide: Phosphoglycerate kinase (394 aa).

Substrate contacts are provided by residues 21–23 (DFN), Arg-36, 59–62 (HLGR), Arg-118, and Arg-151. Residues Lys-202, Gly-293, Glu-324, and 350-353 (GGDS) contribute to the ATP site.

It belongs to the phosphoglycerate kinase family. In terms of assembly, monomer.

It is found in the cytoplasm. It carries out the reaction (2R)-3-phosphoglycerate + ATP = (2R)-3-phospho-glyceroyl phosphate + ADP. Its pathway is carbohydrate degradation; glycolysis; pyruvate from D-glyceraldehyde 3-phosphate: step 2/5. The protein is Phosphoglycerate kinase of Exiguobacterium sp. (strain ATCC BAA-1283 / AT1b).